The sequence spans 146 residues: Large ribosomal subunit protein uL15 (146 aa).

Residues 1-51 form a disordered region; it reads MKLHELQPAAGSRKVRNRVGRGTSSGNGKTSGRGQKGQKARSGGGVRLGFE. 2 stretches are compositionally biased toward gly residues: residues 23-35 and 42-51; these read TSSG…GRGQ and SGGGVRLGFE.

Belongs to the universal ribosomal protein uL15 family. In terms of assembly, part of the 50S ribosomal subunit.

Functionally, binds to the 23S rRNA. The polypeptide is Large ribosomal subunit protein uL15 (Streptococcus sanguinis (strain SK36)).